We begin with the raw amino-acid sequence, 531 residues long: Unconventional prefoldin RPB5 interactor (531 aa).

Residue methionine 1 is modified to N-acetylmethionine. Disordered stretches follow at residues 1–24, 224–381, 408–470, and 500–531; these read MEPP…APLR, ELES…ELPA, KSRS…SGVS, and TIPE…QQRS. Positions 13 to 24 are enriched in low complexity; it reads PLAEASAAAPLR. Composition is skewed to polar residues over residues 257 to 266 and 280 to 296; these read SPVTDSSAAS and GQVN…NSYH. A compositionally biased stretch (acidic residues) spans 300–319; sequence DDDEEEEDDDDDDDEDDDNE. Phosphoserine; by RPS6KB1 is present on serine 369. Positions 414 to 424 are enriched in polar residues; it reads NSVCSDTSESS. Serine 439 bears the Phosphoserine mark.

The protein belongs to the RNA polymerase II subunit 5-mediating protein family. Homodimer. Component of the PAQosome complex which is responsible for the biogenesis of several protein complexes and which consists of R2TP complex members RUVBL1, RUVBL2, RPAP3 and PIH1D1, URI complex members PFDN2, PFDN6, PDRG1, UXT and URI1 as well as ASDURF, POLR2E and DNAAF10/WDR92. Interacts with POLR2E/RPB5, RUVBL2 and RUVBL1. Interacts with PFDN2, PFDN4 and STAP1; the interactions are phosphorylation-dependent and occur in a growth-dependent manner in the mitochondrion. Interacts with UXT. Interacts with PPP1CC; the interaction is phosphorylation-dependent and occurs in a growth factor-dependent manner. Interacts (via the middle C-terminal region) with GTF2F1 and GTF2F2. Interacts with DMAP1. Interacts with TSC1 and TSC2. Interacts with PRPF8 and EFTUD2 in a ZNHIT2-dependent manner. Post-translationally, phosphorylation occurs in response to androgen treatment in prostate cancer cells in a mTOR-dependent manner. Phosphorylated; hyperhosphorylated in mitochondria in a mTORC-dependent signaling pathway. Phosphorylated at Ser-369 by RPS6KB1 in a growth factor- and rapamycin-dependent manner. S6K1-mediated mitochondrial phosphorylation at Ser-369 disrupts the URI1-PPP1CC complex in the mitochondrion, relieves PPP1CC phosphatase inhibition activity and hence engages a negative feedback diminishing RPS6KB1 kinase activity, preventing sustained S6K1-dependent signaling. Phosphorylated. Phosphorylation occurs essentially on serine residues. As to expression, expressed in the spinal cord, ganglia, choroid plexus and olfactors epithelium of the developing brain. Expressed in skin, lung, kidney, testis and muscles (at protein level). Expressed strongly in brain and kidney. Expressed weakly in skeletal muscle, lung and liver.

It is found in the nucleus. Its subcellular location is the cytoplasm. It localises to the mitochondrion. The protein resides in the cell projection. The protein localises to the dendrite. Functionally, involved in gene transcription regulation. Acts as a transcriptional repressor in concert with the corepressor UXT to regulate androgen receptor (AR) transcription. May act as a tumor suppressor to repress AR-mediated gene transcription and to inhibit anchorage-independent growth in prostate cancer cells. Required for cell survival in ovarian cancer cells. Together with UXT, associates with chromatin to the NKX3-1 promoter region. Plays a central role in maintaining S6K1 signaling and BAD phosphorylation under normal growth conditions thereby protecting cells from potential deleterious effects of sustained S6K1 signaling. The URI1-PPP1CC complex acts as a central component of a negative feedback mechanism that counteracts excessive S6K1 survival signaling to BAD in response to growth factors. Mediates inhibition of PPP1CC phosphatase activity in mitochondria. Coordinates the regulation of nutrient-sensitive gene expression availability in a mTOR-dependent manner. Seems to be a scaffolding protein able to assemble a prefoldin-like complex that contains PFDs and proteins with roles in transcription and ubiquitination. The chain is Unconventional prefoldin RPB5 interactor (Uri1) from Mus musculus (Mouse).